Here is an 897-residue protein sequence, read N- to C-terminus: Alanine--tRNA ligase (897 aa).

Zn(2+) is bound by residues His-581, His-585, Cys-684, and His-688.

Belongs to the class-II aminoacyl-tRNA synthetase family. Zn(2+) is required as a cofactor.

The protein localises to the cytoplasm. It catalyses the reaction tRNA(Ala) + L-alanine + ATP = L-alanyl-tRNA(Ala) + AMP + diphosphate. Its function is as follows. Catalyzes the attachment of alanine to tRNA(Ala) in a two-step reaction: alanine is first activated by ATP to form Ala-AMP and then transferred to the acceptor end of tRNA(Ala). Also edits incorrectly charged Ser-tRNA(Ala) and Gly-tRNA(Ala) via its editing domain. In Mycobacterium sp. (strain JLS), this protein is Alanine--tRNA ligase.